The primary structure comprises 368 residues: Riboflavin biosynthesis protein RibD (368 aa).

The interval 1-146 (MISDQTHMRR…EAFCFRIKHQ (146 aa)) is deaminase. The region spanning 2–124 (ISDQTHMRRC…RLRQAGIEVK (123 aa)) is the CMP/dCMP-type deaminase domain. His51 serves as a coordination point for Zn(2+). Glu53 serves as the catalytic Proton donor. 2 residues coordinate Zn(2+): Cys76 and Cys85. Positions 147 to 368 (RPFGIFKYAM…GNDDNGQSNI (222 aa)) are reductase. NADP(+) is bound at residue Ala155. Ser169 is a binding site for substrate. Trp171 is a binding site for NADP(+). Position 185 (Arg185) interacts with substrate. 2 residues coordinate NADP(+): Thr197 and Asp201. The substrate site is built by Leu205 and Glu289. 291-297 (GGILAAE) provides a ligand contact to NADP(+).

This sequence in the N-terminal section; belongs to the cytidine and deoxycytidylate deaminase family. It in the C-terminal section; belongs to the HTP reductase family. Zn(2+) serves as cofactor.

The catalysed reaction is 2,5-diamino-6-hydroxy-4-(5-phosphoribosylamino)-pyrimidine + H2O + H(+) = 5-amino-6-(5-phospho-D-ribosylamino)uracil + NH4(+). It carries out the reaction 5-amino-6-(5-phospho-D-ribitylamino)uracil + NADP(+) = 5-amino-6-(5-phospho-D-ribosylamino)uracil + NADPH + H(+). Its pathway is cofactor biosynthesis; riboflavin biosynthesis; 5-amino-6-(D-ribitylamino)uracil from GTP: step 2/4. It functions in the pathway cofactor biosynthesis; riboflavin biosynthesis; 5-amino-6-(D-ribitylamino)uracil from GTP: step 3/4. Converts 2,5-diamino-6-(ribosylamino)-4(3h)-pyrimidinone 5'-phosphate into 5-amino-6-(ribosylamino)-2,4(1h,3h)-pyrimidinedione 5'-phosphate. The protein is Riboflavin biosynthesis protein RibD (ribD) of Synechocystis sp. (strain ATCC 27184 / PCC 6803 / Kazusa).